The sequence spans 353 residues: Ribosomal RNA small subunit methyltransferase (353 aa).

Residues 1 to 10 (MAGGKIRKEK) show a composition bias toward basic residues. Residues 1-23 (MAGGKIRKEKPKASNRAPSNHYQ) are disordered. S-adenosyl-L-methionine contacts are provided by H35, L37, G62, E83, D111, and N126. The segment at 270–313 (ALNTTSMDLGDQSMGMEDDDNEMDDDDMEMDEGEGDGGETSEFK) is disordered. Positions 285–308 (MEDDDNEMDDDDMEMDEGEGDGGE) are enriched in acidic residues.

It belongs to the class I-like SAM-binding methyltransferase superfamily. rRNA adenine N(6)-methyltransferase family. As to expression, expressed in rapidly dividing tissues, including root meristems and lateral root primordia, developing cotyledons and leaves, petals, anther, pollen grains and silique abscission zone.

It is found in the nucleus. It localises to the nucleolus. It carries out the reaction adenosine(1785)/adenosine(1786) in 18S rRNA + 4 S-adenosyl-L-methionine = N(6)-dimethyladenosine(1785)/N(6)-dimethyladenosine(1786) in 18S rRNA + 4 S-adenosyl-L-homocysteine + 4 H(+). N6-adenine methyltransferase which modifies the AA dinucleotide at the plant nuclear 18S rRNA nucleotides A1785 and A1786. Required for generating appropriate patterns of gene expression during root development, including the cell-specific expression of transcriptional regulators involved in root hair and non-hair cells patterning. The sequence is that of Ribosomal RNA small subunit methyltransferase from Arabidopsis thaliana (Mouse-ear cress).